Consider the following 489-residue polypeptide: MLFLPADTGHPTGVAAASGPHVRSPVARAVRAMEPRCPPPCGCCERLVLNVAGLRFETRARTLGRFPDTLLGDPVRRSRFYDGARREYFFDRHRPSFDAVLYYYQSGGRLRRPAHVPLDVFLEEVSFYGLGAAALARLREDEGCAVPPERPLPRRAFARQLWLLFEFPESSQAARVLAVVSVLVILVSIVVFCLETLPDFRDDRDDPGLAPVAAATGPFLARLNGSSPMPGAPPRQPFNDPFFVVETLCICWFSFELLVRLVACPSKAVFFKNVMNLIDFVAILPYFVALGTELARQRGVGQPAMSLAILRVIRLVRVFRIFKLSRHSKGLQILGQTLRASMRELGLLIFFLFIGVVLFSSAVYFAEVDRVDTHFTSIPESFWWAVVTMTTVGYGDMAPVTVGGKIVGSLCAIAGVLTISLPVPVIVSNFSYFYHRETEGEEAGMYSHVDTQPCGTLEGKANGGLVDSEVPELLPPLWPPAGKHMVTEV.

A helical transmembrane segment spans residues 176–196 (VLAVVSVLVILVSIVVFCLET). A glycan (N-linked (GlcNAc...) asparagine) is linked at Asn224. Residues 242 to 262 (FFVVETLCICWFSFELLVRLV) form a helical membrane-spanning segment. A lipid anchor (S-palmitoyl cysteine) is attached at Cys264. Residues 274-294 (VMNLIDFVAILPYFVALGTEL) form a helical membrane-spanning segment. Residues 309–328 (ILRVIRLVRVFRIFKLSRHS) form a helical; Voltage-sensor membrane-spanning segment. Residues 345-365 (LGLLIFFLFIGVVLFSSAVYF) traverse the membrane as a helical segment. The short motif at 391–396 (TVGYGD) is the Selectivity filter element. Residues 406 to 426 (IVGSLCAIAGVLTISLPVPVI) form a helical membrane-spanning segment.

This sequence belongs to the potassium channel family. A (Shaker) (TC 1.A.1.2) subfamily. Kv1.7/KCNA7 sub-subfamily. Heterotetramer of potassium channel proteins. Detected in heart, skeletal muscle, brain, and pancreatic islet cells.

Its subcellular location is the membrane. It carries out the reaction K(+)(in) = K(+)(out). In terms of biological role, mediates the voltage-dependent potassium ion permeability of excitable membranes. Assuming opened or closed conformations in response to the voltage difference across the membrane, the protein forms a potassium-selective channel through which potassium ions may pass in accordance with their electrochemical gradient. Channels formed by isoform 1 inactivate faster than channels formed by isoform 2. This is Potassium voltage-gated channel subfamily A member 7 (Kcna7) from Mus musculus (Mouse).